Here is a 205-residue protein sequence, read N- to C-terminus: Peptidyl-tRNA hydrolase (205 aa).

TRNA is bound at residue Tyr14. His19 acts as the Proton acceptor in catalysis. Residues Tyr68, Asn70, and Asn116 each coordinate tRNA.

The protein belongs to the PTH family. As to quaternary structure, monomer.

The protein resides in the cytoplasm. The catalysed reaction is an N-acyl-L-alpha-aminoacyl-tRNA + H2O = an N-acyl-L-amino acid + a tRNA + H(+). Functionally, hydrolyzes ribosome-free peptidyl-tRNAs (with 1 or more amino acids incorporated), which drop off the ribosome during protein synthesis, or as a result of ribosome stalling. Catalyzes the release of premature peptidyl moieties from peptidyl-tRNA molecules trapped in stalled 50S ribosomal subunits, and thus maintains levels of free tRNAs and 50S ribosomes. The chain is Peptidyl-tRNA hydrolase from Caulobacter vibrioides (strain ATCC 19089 / CIP 103742 / CB 15) (Caulobacter crescentus).